We begin with the raw amino-acid sequence, 555 residues long: Urocanate hydratase (555 aa).

NAD(+)-binding positions include G53–G54, Q131, G177–G179, E197, R202, N243–A244, Q264–H268, Y274–L275, and Y323. C411 is an active-site residue. G493 is a binding site for NAD(+).

Belongs to the urocanase family. The cofactor is NAD(+).

It is found in the cytoplasm. It catalyses the reaction 4-imidazolone-5-propanoate = trans-urocanate + H2O. Its pathway is amino-acid degradation; L-histidine degradation into L-glutamate; N-formimidoyl-L-glutamate from L-histidine: step 2/3. In terms of biological role, catalyzes the conversion of urocanate to 4-imidazolone-5-propionate. The chain is Urocanate hydratase from Maricaulis maris (strain MCS10) (Caulobacter maris).